The sequence spans 194 residues: dITP/XTP pyrophosphatase (194 aa).

11-16 (SHNAGK) is a binding site for substrate. D70 acts as the Proton acceptor in catalysis. D70 contributes to the Mg(2+) binding site. Residues S71, 149–152 (FGYD), K172, and 177–178 (HR) each bind substrate.

It belongs to the HAM1 NTPase family. Homodimer. Mg(2+) is required as a cofactor.

The enzyme catalyses XTP + H2O = XMP + diphosphate + H(+). The catalysed reaction is dITP + H2O = dIMP + diphosphate + H(+). It carries out the reaction ITP + H2O = IMP + diphosphate + H(+). Pyrophosphatase that catalyzes the hydrolysis of nucleoside triphosphates to their monophosphate derivatives, with a high preference for the non-canonical purine nucleotides XTP (xanthosine triphosphate), dITP (deoxyinosine triphosphate) and ITP. Seems to function as a house-cleaning enzyme that removes non-canonical purine nucleotides from the nucleotide pool, thus preventing their incorporation into DNA/RNA and avoiding chromosomal lesions. The polypeptide is dITP/XTP pyrophosphatase (Thermosynechococcus vestitus (strain NIES-2133 / IAM M-273 / BP-1)).